A 341-amino-acid polypeptide reads, in one-letter code: Glycerol-3-phosphate dehydrogenase [NAD(P)+] (341 aa).

Positions 13, 14, and 108 each coordinate NADPH. The sn-glycerol 3-phosphate site is built by Lys108, Gly139, and Ser141. Ala143 contacts NADPH. Sn-glycerol 3-phosphate contacts are provided by Lys194, Asp247, Ser257, Arg258, and Asn259. Catalysis depends on Lys194, which acts as the Proton acceptor. Residue Arg258 coordinates NADPH. NADPH-binding residues include Val282 and Glu284.

This sequence belongs to the NAD-dependent glycerol-3-phosphate dehydrogenase family.

Its subcellular location is the cytoplasm. It carries out the reaction sn-glycerol 3-phosphate + NAD(+) = dihydroxyacetone phosphate + NADH + H(+). It catalyses the reaction sn-glycerol 3-phosphate + NADP(+) = dihydroxyacetone phosphate + NADPH + H(+). Its pathway is membrane lipid metabolism; glycerophospholipid metabolism. Functionally, catalyzes the reduction of the glycolytic intermediate dihydroxyacetone phosphate (DHAP) to sn-glycerol 3-phosphate (G3P), the key precursor for phospholipid synthesis. In Lactococcus lactis subsp. lactis (strain IL1403) (Streptococcus lactis), this protein is Glycerol-3-phosphate dehydrogenase [NAD(P)+].